The chain runs to 213 residues: ATP synthase peripheral stalk subunit OSCP, mitochondrial (213 aa).

Residues 1-23 (MASQAVSGLSRQVRCFSTSVVRP) constitute a mitochondrion transit peptide. Residues 5–23 (AVSGLSRQVRCFSTSVVRP) carry the SIFI-degron motif. Residues K54, K60, K70, and K73 each carry the N6-acetyllysine modification. Residue K90 is modified to N6-succinyllysine. An N6-acetyllysine; alternate mark is found at K100, K158, and K162. K100, K158, and K162 each carry N6-succinyllysine; alternate. Residues K172, K176, and K192 each carry the N6-acetyllysine modification. An N6-succinyllysine modification is found at K199.

The protein belongs to the ATPase delta chain family. In terms of assembly, component of the ATP synthase complex composed at least of ATP5F1A/subunit alpha, ATP5F1B/subunit beta, ATP5MC1/subunit c (homooctomer), MT-ATP6/subunit a, MT-ATP8/subunit 8, ATP5ME/subunit e, ATP5MF/subunit f, ATP5MG/subunit g, ATP5MK/subunit k, ATP5MJ/subunit j, ATP5F1C/subunit gamma, ATP5F1D/subunit delta, ATP5F1E/subunit epsilon, ATP5PF/subunit F6, ATP5PB/subunit b, ATP5PD/subunit d, ATP5PO/subunit OSCP. ATP synthase complex consists of a soluble F(1) head domain (subunits alpha(3) and beta(3)) - the catalytic core - and a membrane F(0) domain - the membrane proton channel (subunits c, a, 8, e, f, g, k and j). These two domains are linked by a central stalk (subunits gamma, delta, and epsilon) rotating inside the F1 region and a stationary peripheral stalk (subunits F6, b, d, and OSCP). Acetylation at Lys-162 decreases ATP production. Deacetylated by SIRT3. In terms of processing, in response to mitochondrial stress, the precursor protein is ubiquitinated by the SIFI complex in the cytoplasm before mitochondrial import, leading to its degradation. Within the SIFI complex, UBR4 initiates ubiquitin chain that are further elongated or branched by KCMF1.

The protein localises to the mitochondrion. The protein resides in the mitochondrion inner membrane. Subunit OSCP, of the mitochondrial membrane ATP synthase complex (F(1)F(0) ATP synthase or Complex V) that produces ATP from ADP in the presence of a proton gradient across the membrane which is generated by electron transport complexes of the respiratory chain. ATP synthase complex consist of a soluble F(1) head domain - the catalytic core - and a membrane F(1) domain - the membrane proton channel. These two domains are linked by a central stalk rotating inside the F(1) region and a stationary peripheral stalk. During catalysis, ATP synthesis in the catalytic domain of F(1) is coupled via a rotary mechanism of the central stalk subunits to proton translocation. In vivo, can only synthesize ATP although its ATP hydrolase activity can be activated artificially in vitro. Part of the complex F(0) domain. Part of the complex F(0) domain and the peripheric stalk, which acts as a stator to hold the catalytic alpha(3)beta(3) subcomplex and subunit a/ATP6 static relative to the rotary elements. The polypeptide is ATP synthase peripheral stalk subunit OSCP, mitochondrial (Sus scrofa (Pig)).